We begin with the raw amino-acid sequence, 99 residues long: Ribosomal processing cysteine protease Prp (99 aa).

His-16 functions as the Proton donor in the catalytic mechanism. Residue Cys-28 is the Nucleophile of the active site.

The protein belongs to the Prp family. In terms of assembly, homodimer.

Its function is as follows. An essential cysteine protease that cleaves the N-terminus from ribosomal protein bL27. The protein is Ribosomal processing cysteine protease Prp of Mycoplasma genitalium (strain ATCC 33530 / DSM 19775 / NCTC 10195 / G37) (Mycoplasmoides genitalium).